Consider the following 307-residue polypeptide: Opsin-like protein carO (307 aa).

N-linked (GlcNAc...) asparagine glycosylation occurs at N28. The next 7 membrane-spanning stretches (helical) occupy residues 36–56, 64–84, 118–138, 140–160, 166–186, 202–222, and 235–255; these read WYWAVCAVMTVSTFAFLGLGM, IFHYITAGITMIASIAYFTMA, WFLTTPLLLTDLLLTAGMPWP, VLWVILVDWVMIVTGLVGALV, WGYFAFGCAALAYIVYVLAWE, FVMCGSLTAVVWILYPIAWGV, and AVFYGILDLIAKPVFGALLLW. A disordered region spans residues 280 to 307; it reads GPNNKVASGHGARNDTATASGSNVNPNA. N-linked (GlcNAc...) asparagine glycosylation occurs at N293. The segment covering 294-307 has biased composition (polar residues); sequence DTATASGSNVNPNA.

Belongs to the archaeal/bacterial/fungal opsin family.

It is found in the membrane. In terms of biological role, opsin-like protein; part of the car gene cluster that mediates the biosynthesis of neurosporaxanthin, a carboxylic apocarotenoid acting as an essential protective pigment and leading to orange pigmentation. The exact role of carO in carotenoid biosynthesis is not known yet, but it could be involved in the regulation of the pathway by light or other stimuli. This Fusarium fujikuroi (Bakanae and foot rot disease fungus) protein is Opsin-like protein carO.